A 176-amino-acid chain; its full sequence is uncharacterized protein (176 aa).

Residues 71–176 (RDDMSSDSDG…YSTDDDEDDY (106 aa)) are disordered. 2 stretches are compositionally biased toward low complexity: residues 77-87 (DSDGPAASPPG) and 100-109 (SYSSSDSSAR). A compositionally biased stretch (basic residues) spans 140–152 (KARRPARKKKRIG).

This is an uncharacterized protein from Orgyia pseudotsugata multicapsid polyhedrosis virus (OpMNPV).